An 856-amino-acid polypeptide reads, in one-letter code: FO synthase (856 aa).

Radical SAM core domains follow at residues 84 to 336 (ISYS…APPN) and 544 to 785 (VTFV…SHIQ). The interval 85–417 (SYSRKVFIPV…PRVRGHVVAL (333 aa)) is cofG-like. [4Fe-4S] cluster contacts are provided by C98, C102, C105, C558, C562, and C565. Residues 521–854 (DGPALEAVAA…RQRTTTYALL (334 aa)) form a cofH-like region.

In the N-terminal section; belongs to the radical SAM superfamily. CofG family. The protein in the C-terminal section; belongs to the radical SAM superfamily. CofH family. [4Fe-4S] cluster is required as a cofactor.

The enzyme catalyses 5-amino-6-(D-ribitylamino)uracil + L-tyrosine + S-adenosyl-L-methionine = 5-amino-5-(4-hydroxybenzyl)-6-(D-ribitylimino)-5,6-dihydrouracil + 2-iminoacetate + 5'-deoxyadenosine + L-methionine + H(+). The catalysed reaction is 5-amino-5-(4-hydroxybenzyl)-6-(D-ribitylimino)-5,6-dihydrouracil + S-adenosyl-L-methionine = 7,8-didemethyl-8-hydroxy-5-deazariboflavin + 5'-deoxyadenosine + L-methionine + NH4(+) + H(+). It participates in cofactor biosynthesis; coenzyme F0 biosynthesis. Functionally, catalyzes the radical-mediated synthesis of 7,8-didemethyl-8-hydroxy-5-deazariboflavin (FO) from 5-amino-6-(D-ribitylamino)uracil and L-tyrosine. The polypeptide is FO synthase (fbiC) (Mycobacterium bovis (strain ATCC BAA-935 / AF2122/97)).